A 500-amino-acid chain; its full sequence is Cobyric acid synthase (500 aa).

The region spanning 253-446 is the GATase cobBQ-type domain; the sequence is KIGVAAIYFP…FHGFFDRPEV (194 aa). The active-site Nucleophile is the cysteine 334. Histidine 438 is a catalytic residue.

The protein belongs to the CobB/CobQ family. CobQ subfamily.

It participates in cofactor biosynthesis; adenosylcobalamin biosynthesis. Its function is as follows. Catalyzes amidations at positions B, D, E, and G on adenosylcobyrinic A,C-diamide. NH(2) groups are provided by glutamine, and one molecule of ATP is hydrogenolyzed for each amidation. The protein is Cobyric acid synthase of Chlorobaculum tepidum (strain ATCC 49652 / DSM 12025 / NBRC 103806 / TLS) (Chlorobium tepidum).